The sequence spans 468 residues: Putative ankyrin repeat protein R873 (468 aa).

ANK repeat units lie at residues 38-68 (IKTD…KHNL), 78-107 (SLNE…DIEG), 109-137 (DNCA…NFRA), 138-167 (NNDK…DIRS), 169-197 (NDCS…NIRT), 198-227 (NDDW…DIRS), 229-257 (DDHA…NIIA), 258-287 (EDNY…NITS), 289-316 (YYTI…NIRD), 317-346 (CDSS…DFRE), 348-376 (DDLT…DFRV), 378-406 (DDYP…DVRA), 407-436 (EDDY…NIRA), and 438-466 (NDYA…VLNK).

The sequence is that of Putative ankyrin repeat protein R873 from Acanthamoeba polyphaga mimivirus (APMV).